Reading from the N-terminus, the 504-residue chain is MEEYQGYLELDRFRQHDFLYPLIFREYSYALAHGHGLNRYMLLENIGYDNKSSLLIVKRLITTMYQQNYLIISANDSKQNPFFGYNKNLHSKILSEGFAIIVEIPFYLRLISSLEGAEIVRFYNLRSIHSIFPFLEEKFPHLNYSADILIPYPAHLEILVQTLRYRVKDASYLHLLRFFLHEYSNCNSLIITNKSLSIFSKSNPRFFLFLYNSYICEYESIFLFLRNQSSHLRLTSSGILFERLCLYRKIEHFAEVFANDFTGIPCFLKDPFMHYVRYQGKSILASKDTPLLMNKCKSYLVNLWQCHFDVWSHAASIRINQLSKHSLDFLSYLSSVRRNPAVVRNQMLENSFLLNNAPNKLDTIVPIIPLIGSLAKAKFCNAVGHPISKLTRADLSDFEIINRFLHICRNLSHYYSGSSKKKNMYRIKYILRLSCVKTLARKHKSTARAFLKRVDSEFFQEFFTEEGGFISLIFPRASFALRRLYSGRVWYLDIIFINGLSNHE.

Belongs to the intron maturase 2 family. MatK subfamily.

It localises to the plastid. The protein resides in the chloroplast. Its function is as follows. Usually encoded in the trnK tRNA gene intron. Probably assists in splicing its own and other chloroplast group II introns. This Quercus coccifera (Kermes oak) protein is Maturase K.